Reading from the N-terminus, the 391-residue chain is F-box protein At2g34280 (391 aa).

Positions 1–43 (MDLLPYDVVEHILERLDVKSLLNCKSVSKQWRSTIRCRAFQER) constitute an F-box domain.

The polypeptide is F-box protein At2g34280 (Arabidopsis thaliana (Mouse-ear cress)).